Here is a 161-residue protein sequence, read N- to C-terminus: RNA pyrophosphohydrolase (161 aa).

The region spanning 6 to 149 (GYRPNVGIIL…KREVYRRAMR (144 aa)) is the Nudix hydrolase domain. Positions 38-59 (GGIKKDESPEEALFRELKEEVG) match the Nudix box motif.

This sequence belongs to the Nudix hydrolase family. RppH subfamily. It depends on a divalent metal cation as a cofactor.

Its function is as follows. Accelerates the degradation of transcripts by removing pyrophosphate from the 5'-end of triphosphorylated RNA, leading to a more labile monophosphorylated state that can stimulate subsequent ribonuclease cleavage. This is RNA pyrophosphohydrolase from Hahella chejuensis (strain KCTC 2396).